A 586-amino-acid chain; its full sequence is Non-structural glycoprotein GNS (586 aa).

Residues 1 to 14 form the signal peptide; sequence MFLQLFNIVLIYGV. Residues 15–544 lie on the Extracellular side of the membrane; that stretch reads RTSQSTWINY…QNKEYWNEES (530 aa). Residues N27, N68, N274, N350, N383, N476, N501, and N521 are each glycosylated (N-linked (GlcNAc...) asparagine; by host). The chain crosses the membrane as a helical span at residues 545 to 562; the sequence is SIWGISTIITVLGIYYIY. The Cytoplasmic portion of the chain corresponds to 563 to 586; sequence RKNRREKIFLNMKHRVQRFFKLDY.

Belongs to the ephemerovirus glycoprotein family.

The protein resides in the host membrane. The protein is Non-structural glycoprotein GNS (GNS) of Bos taurus (Bovine).